The chain runs to 106 residues: Large ribosomal subunit protein uL24 (106 aa).

The protein belongs to the universal ribosomal protein uL24 family. In terms of assembly, part of the 50S ribosomal subunit.

In terms of biological role, one of two assembly initiator proteins, it binds directly to the 5'-end of the 23S rRNA, where it nucleates assembly of the 50S subunit. Functionally, one of the proteins that surrounds the polypeptide exit tunnel on the outside of the subunit. The protein is Large ribosomal subunit protein uL24 of Desulforamulus reducens (strain ATCC BAA-1160 / DSM 100696 / MI-1) (Desulfotomaculum reducens).